A 100-amino-acid polypeptide reads, in one-letter code: Urease subunit gamma (100 aa).

It belongs to the urease gamma subunit family. As to quaternary structure, heterotrimer of UreA (gamma), UreB (beta) and UreC (alpha) subunits. Three heterotrimers associate to form the active enzyme.

The protein resides in the cytoplasm. It carries out the reaction urea + 2 H2O + H(+) = hydrogencarbonate + 2 NH4(+). It functions in the pathway nitrogen metabolism; urea degradation; CO(2) and NH(3) from urea (urease route): step 1/1. In Pseudomonas putida (strain ATCC 700007 / DSM 6899 / JCM 31910 / BCRC 17059 / LMG 24140 / F1), this protein is Urease subunit gamma.